Here is a 154-residue protein sequence, read N- to C-terminus: Cyanate hydratase (154 aa).

Active-site residues include Arg-100, Glu-103, and Ser-126.

It belongs to the cyanase family.

It carries out the reaction cyanate + hydrogencarbonate + 3 H(+) = NH4(+) + 2 CO2. Its function is as follows. Catalyzes the reaction of cyanate with bicarbonate to produce ammonia and carbon dioxide. The protein is Cyanate hydratase of Aspergillus clavatus (strain ATCC 1007 / CBS 513.65 / DSM 816 / NCTC 3887 / NRRL 1 / QM 1276 / 107).